We begin with the raw amino-acid sequence, 459 residues long: Ribulose bisphosphate carboxylase (459 aa).

Asn-111 is a substrate binding site. Lys-166 functions as the Proton acceptor in the catalytic mechanism. Lys-168 contributes to the substrate binding site. The Mg(2+) site is built by Lys-191, Asp-193, and Glu-194. The residue at position 191 (Lys-191) is an N6-carboxylysine. Residue His-287 is the Proton acceptor of the active site. Substrate is bound by residues Arg-288, His-321, and Ser-368.

It belongs to the RuBisCO large chain family. Type II subfamily. As to quaternary structure, homodimer. Mg(2+) serves as cofactor.

The enzyme catalyses 2 (2R)-3-phosphoglycerate + 2 H(+) = D-ribulose 1,5-bisphosphate + CO2 + H2O. The catalysed reaction is D-ribulose 1,5-bisphosphate + O2 = 2-phosphoglycolate + (2R)-3-phosphoglycerate + 2 H(+). Functionally, ruBisCO catalyzes two reactions: the carboxylation of D-ribulose 1,5-bisphosphate, the primary event in carbon dioxide fixation, as well as the oxidative fragmentation of the pentose substrate. Both reactions occur simultaneously and in competition at the same active site. This chain is Ribulose bisphosphate carboxylase, found in Cereibacter sphaeroides (strain ATCC 17029 / ATH 2.4.9) (Rhodobacter sphaeroides).